A 272-amino-acid polypeptide reads, in one-letter code: Tryptophan synthase alpha chain (272 aa).

Active-site proton acceptor residues include glutamate 49 and aspartate 60.

The protein belongs to the TrpA family. Tetramer of two alpha and two beta chains.

It catalyses the reaction (1S,2R)-1-C-(indol-3-yl)glycerol 3-phosphate + L-serine = D-glyceraldehyde 3-phosphate + L-tryptophan + H2O. The protein operates within amino-acid biosynthesis; L-tryptophan biosynthesis; L-tryptophan from chorismate: step 5/5. Its function is as follows. The alpha subunit is responsible for the aldol cleavage of indoleglycerol phosphate to indole and glyceraldehyde 3-phosphate. The protein is Tryptophan synthase alpha chain of Hydrogenovibrio crunogenus (strain DSM 25203 / XCL-2) (Thiomicrospira crunogena).